The primary structure comprises 163 residues: Thiol peroxidase (163 aa).

One can recognise a Thioredoxin domain in the interval 16–162 (LQVGDTAHDF…YDAAIAAVKN (147 aa)). Cysteine 58 serves as the catalytic Cysteine sulfenic acid (-SOH) intermediate. A disulfide bridge connects residues cysteine 58 and cysteine 92.

It belongs to the peroxiredoxin family. Tpx subfamily. Homodimer.

It catalyses the reaction a hydroperoxide + [thioredoxin]-dithiol = an alcohol + [thioredoxin]-disulfide + H2O. In terms of biological role, thiol-specific peroxidase that catalyzes the reduction of hydrogen peroxide and organic hydroperoxides to water and alcohols, respectively. Plays a role in cell protection against oxidative stress by detoxifying peroxides. This Streptococcus gordonii protein is Thiol peroxidase.